We begin with the raw amino-acid sequence, 830 residues long: uncharacterized protein (830 aa).

Over residues 1-12 the composition is skewed to basic and acidic residues; the sequence is MEKASKNKESGV. Residues 1–61 are disordered; that stretch reads MEKASKNKES…SIKSKNKKKT (61 aa). Residues 15-25 are compositionally biased toward polar residues; the sequence is ANNSFLQNFGV. In terms of domain architecture, Helicase ATP-binding spans 249-433; it reads TVSKSSASGG…YSLVKFLHIN (185 aa). ATP is bound at residue 262–269; it reads DDMGLGKT. The short motif at 384–387 is the DEAH box element; it reads DEAH. Positions 662 to 816 constitute a Helicase C-terminal domain; it reads EEDDTVRGLR…KSVFTSKKLT (155 aa). Serine 712 carries the phosphoserine modification.

Belongs to the SNF2/RAD54 helicase family.

It is found in the nucleus. This is an uncharacterized protein from Schizosaccharomyces pombe (strain 972 / ATCC 24843) (Fission yeast).